The sequence spans 66 residues: Large ribosomal subunit protein bL35 (66 aa).

The span at 1-16 shows a compositional bias: basic residues; it reads MPKMKTHRGAAKRVKR. Residues 1–28 form a disordered region; the sequence is MPKMKTHRGAAKRVKRTGSGQLKRSRAF.

Belongs to the bacterial ribosomal protein bL35 family.

The protein is Large ribosomal subunit protein bL35 of Staphylococcus epidermidis (strain ATCC 35984 / DSM 28319 / BCRC 17069 / CCUG 31568 / BM 3577 / RP62A).